A 962-amino-acid polypeptide reads, in one-letter code: Glycine dehydrogenase (decarboxylating) (962 aa).

The residue at position 709 (lysine 709) is an N6-(pyridoxal phosphate)lysine.

Belongs to the GcvP family. In terms of assembly, the glycine cleavage system is composed of four proteins: P, T, L and H. Pyridoxal 5'-phosphate serves as cofactor.

It catalyses the reaction N(6)-[(R)-lipoyl]-L-lysyl-[glycine-cleavage complex H protein] + glycine + H(+) = N(6)-[(R)-S(8)-aminomethyldihydrolipoyl]-L-lysyl-[glycine-cleavage complex H protein] + CO2. The glycine cleavage system catalyzes the degradation of glycine. The P protein binds the alpha-amino group of glycine through its pyridoxal phosphate cofactor; CO(2) is released and the remaining methylamine moiety is then transferred to the lipoamide cofactor of the H protein. The protein is Glycine dehydrogenase (decarboxylating) of Shewanella pealeana (strain ATCC 700345 / ANG-SQ1).